A 242-amino-acid chain; its full sequence is Cytochrome c oxidase subunit 2 (242 aa).

Residues 7-33 lie on the Mitochondrial intermembrane side of the membrane; sequence DVPVPYGLYFQDSATPTFDGIIELHDI. Residues 34-55 traverse the membrane as a helical segment; it reads VMFYIVVTIVLVSYLLFVIIKN. At 56–73 the chain is on the mitochondrial matrix side; the sequence is FSNDHISYKYLTHGTTLE. A helical membrane pass occupies residues 74–98; sequence IVWTIFPVVILLFIAFPSFILLYLC. Residues 99–242 are Mitochondrial intermembrane-facing; it reads DEVIDPAMTI…DKFLSWLDEQ (144 aa). Positions 177, 212, 214, 216, 220, and 223 each coordinate Cu cation. Residue Glu214 participates in Mg(2+) binding.

This sequence belongs to the cytochrome c oxidase subunit 2 family. In terms of assembly, component of the cytochrome c oxidase (complex IV, CIV), a multisubunit enzyme composed of a catalytic core of 3 subunits and several supernumerary subunits. The complex exists as a monomer or a dimer and forms supercomplexes (SCs) in the inner mitochondrial membrane with ubiquinol-cytochrome c oxidoreductase (cytochrome b-c1 complex, complex III, CIII). Cu cation is required as a cofactor. In terms of processing, the signal sequence of COX2 is processed by IMP1.

The protein localises to the mitochondrion inner membrane. It carries out the reaction 4 Fe(II)-[cytochrome c] + O2 + 8 H(+)(in) = 4 Fe(III)-[cytochrome c] + 2 H2O + 4 H(+)(out). Functionally, component of the cytochrome c oxidase, the last enzyme in the mitochondrial electron transport chain which drives oxidative phosphorylation. The respiratory chain contains 3 multisubunit complexes succinate dehydrogenase (complex II, CII), ubiquinol-cytochrome c oxidoreductase (cytochrome b-c1 complex, complex III, CIII) and cytochrome c oxidase (complex IV, CIV), that cooperate to transfer electrons derived from NADH and succinate to molecular oxygen, creating an electrochemical gradient over the inner membrane that drives transmembrane transport and the ATP synthase. Cytochrome c oxidase is the component of the respiratory chain that catalyzes the reduction of oxygen to water. Electrons originating from reduced cytochrome c in the intermembrane space (IMS) are transferred via the dinuclear copper A center (CU(A)) of subunit 2 and heme A of subunit 1 to the active site in subunit 1, a binuclear center (BNC) formed by heme A3 and copper B (CU(B)). The BNC reduces molecular oxygen to 2 water molecules using 4 electrons from cytochrome c in the IMS and 4 protons from the mitochondrial matrix. In Yarrowia lipolytica (strain CLIB 122 / E 150) (Yeast), this protein is Cytochrome c oxidase subunit 2 (COX2).